Consider the following 204-residue polypeptide: Thiamine-phosphate synthase (204 aa).

4-amino-2-methyl-5-(diphosphooxymethyl)pyrimidine-binding positions include 32–36 (QLRMK) and Asp64. Mg(2+)-binding residues include Asp65 and Asp84. Thr103 contributes to the 4-amino-2-methyl-5-(diphosphooxymethyl)pyrimidine binding site. 2-[(2R,5Z)-2-carboxy-4-methylthiazol-5(2H)-ylidene]ethyl phosphate is bound at residue 129–131 (TTT). Lys132 is a binding site for 4-amino-2-methyl-5-(diphosphooxymethyl)pyrimidine. A 2-[(2R,5Z)-2-carboxy-4-methylthiazol-5(2H)-ylidene]ethyl phosphate-binding site is contributed by Gly165.

The protein belongs to the thiamine-phosphate synthase family. It depends on Mg(2+) as a cofactor.

It catalyses the reaction 2-[(2R,5Z)-2-carboxy-4-methylthiazol-5(2H)-ylidene]ethyl phosphate + 4-amino-2-methyl-5-(diphosphooxymethyl)pyrimidine + 2 H(+) = thiamine phosphate + CO2 + diphosphate. The catalysed reaction is 2-(2-carboxy-4-methylthiazol-5-yl)ethyl phosphate + 4-amino-2-methyl-5-(diphosphooxymethyl)pyrimidine + 2 H(+) = thiamine phosphate + CO2 + diphosphate. The enzyme catalyses 4-methyl-5-(2-phosphooxyethyl)-thiazole + 4-amino-2-methyl-5-(diphosphooxymethyl)pyrimidine + H(+) = thiamine phosphate + diphosphate. Its pathway is cofactor biosynthesis; thiamine diphosphate biosynthesis; thiamine phosphate from 4-amino-2-methyl-5-diphosphomethylpyrimidine and 4-methyl-5-(2-phosphoethyl)-thiazole: step 1/1. Functionally, condenses 4-methyl-5-(beta-hydroxyethyl)thiazole monophosphate (THZ-P) and 2-methyl-4-amino-5-hydroxymethyl pyrimidine pyrophosphate (HMP-PP) to form thiamine monophosphate (TMP). The polypeptide is Thiamine-phosphate synthase (Bacteroides fragilis (strain YCH46)).